Here is a 663-residue protein sequence, read N- to C-terminus: DNA ligase (663 aa).

Residues Asp-33–Asp-37, Ser-82–Leu-83, and Glu-113 each bind NAD(+). The active-site N6-AMP-lysine intermediate is Lys-115. NAD(+) contacts are provided by Arg-136, Glu-170, Lys-286, and Lys-310. The Zn(2+) site is built by Cys-404, Cys-407, Cys-422, and Cys-427. Residues Ser-587–Leu-663 enclose the BRCT domain.

Belongs to the NAD-dependent DNA ligase family. LigA subfamily. Requires Mg(2+) as cofactor. Mn(2+) serves as cofactor.

It catalyses the reaction NAD(+) + (deoxyribonucleotide)n-3'-hydroxyl + 5'-phospho-(deoxyribonucleotide)m = (deoxyribonucleotide)n+m + AMP + beta-nicotinamide D-nucleotide.. Its function is as follows. DNA ligase that catalyzes the formation of phosphodiester linkages between 5'-phosphoryl and 3'-hydroxyl groups in double-stranded DNA using NAD as a coenzyme and as the energy source for the reaction. It is essential for DNA replication and repair of damaged DNA. This chain is DNA ligase, found in Natranaerobius thermophilus (strain ATCC BAA-1301 / DSM 18059 / JW/NM-WN-LF).